Consider the following 514-residue polypeptide: ATP synthase subunit alpha (514 aa).

170 to 177 (GDRQIGKS) lines the ATP pocket.

The protein belongs to the ATPase alpha/beta chains family. In terms of assembly, F-type ATPases have 2 components, CF(1) - the catalytic core - and CF(0) - the membrane proton channel. CF(1) has five subunits: alpha(3), beta(3), gamma(1), delta(1), epsilon(1). CF(0) has three main subunits: a(1), b(2) and c(9-12). The alpha and beta chains form an alternating ring which encloses part of the gamma chain. CF(1) is attached to CF(0) by a central stalk formed by the gamma and epsilon chains, while a peripheral stalk is formed by the delta and b chains.

Its subcellular location is the cell inner membrane. It carries out the reaction ATP + H2O + 4 H(+)(in) = ADP + phosphate + 5 H(+)(out). Functionally, produces ATP from ADP in the presence of a proton gradient across the membrane. The alpha chain is a regulatory subunit. This is ATP synthase subunit alpha from Chromohalobacter salexigens (strain ATCC BAA-138 / DSM 3043 / CIP 106854 / NCIMB 13768 / 1H11).